We begin with the raw amino-acid sequence, 62 residues long: Teretoxin Tsu1.1 (62 aa).

Positions 1-21 (MSCFPVLFVMMLLASQSVWAF) are cleaved as a signal peptide. A propeptide spanning residues 22–40 (PEPETRIGTARDAESMGVR) is cleaved from the precursor.

The protein belongs to the teretoxin A (TA) superfamily. In terms of processing, contains 2 disulfide bonds. In terms of tissue distribution, expressed by the venom duct.

It localises to the secreted. In Terebra subulata (Chocolate spotted auger), this protein is Teretoxin Tsu1.1.